Reading from the N-terminus, the 664-residue chain is Fructose-1,6-bisphosphatase class 3 (664 aa).

This sequence belongs to the FBPase class 3 family. Requires Mn(2+) as cofactor.

The enzyme catalyses beta-D-fructose 1,6-bisphosphate + H2O = beta-D-fructose 6-phosphate + phosphate. It participates in carbohydrate biosynthesis; gluconeogenesis. This chain is Fructose-1,6-bisphosphatase class 3, found in Bacteroides thetaiotaomicron (strain ATCC 29148 / DSM 2079 / JCM 5827 / CCUG 10774 / NCTC 10582 / VPI-5482 / E50).